Here is a 194-residue protein sequence, read N- to C-terminus: MTIKLIVGLANPGAEYAATRHNAGAWFVDLLAERLRAPLREEAKFFGYTSRVTLGGEDVRLLVPTTFMNLSGKAVAAMASFFRINPDEILVVHDELDLPPGVAKFKLGGGHGGHNGLKDIISKLGNNPNFHRLRIGIGHPGDKNKVVGFVLGKPPVSEQKLIDEAIDEAVRCTEMWFTDGLTKATNRLHAFKAQ.

Tyrosine 16 is a tRNA binding site. Catalysis depends on histidine 21, which acts as the Proton acceptor. Residues phenylalanine 67, asparagine 69, and asparagine 115 each contribute to the tRNA site.

The protein belongs to the PTH family. Monomer.

It localises to the cytoplasm. It carries out the reaction an N-acyl-L-alpha-aminoacyl-tRNA + H2O = an N-acyl-L-amino acid + a tRNA + H(+). Functionally, hydrolyzes ribosome-free peptidyl-tRNAs (with 1 or more amino acids incorporated), which drop off the ribosome during protein synthesis, or as a result of ribosome stalling. Catalyzes the release of premature peptidyl moieties from peptidyl-tRNA molecules trapped in stalled 50S ribosomal subunits, and thus maintains levels of free tRNAs and 50S ribosomes. This Shigella dysenteriae serotype 1 (strain Sd197) protein is Peptidyl-tRNA hydrolase.